The following is a 254-amino-acid chain: Arginine transport ATP-binding protein ArgV (254 aa).

The ABC transporter domain occupies isoleucine 6 to leucine 250. Glycine 38–serine 45 is a binding site for ATP.

It belongs to the ABC transporter superfamily. The complex is probably composed of two ATP-binding proteins (ArgV), two transmembrane proteins (ArgU) and a solute-binding protein (ArgT).

Its subcellular location is the cell membrane. It carries out the reaction a polar amino acid(out) + ATP + H2O = a polar amino acid(in) + ADP + phosphate + H(+). The enzyme catalyses L-arginine(out) + ATP + H2O = L-arginine(in) + ADP + phosphate + H(+). In terms of biological role, part of the ABC transporter complex ArgTUV involved in L-arginine import. May also transport L-citrulline. Probably responsible for energy coupling to the transport system. The chain is Arginine transport ATP-binding protein ArgV from Corynebacterium glutamicum (strain ATCC 13032 / DSM 20300 / JCM 1318 / BCRC 11384 / CCUG 27702 / LMG 3730 / NBRC 12168 / NCIMB 10025 / NRRL B-2784 / 534).